Here is a 454-residue protein sequence, read N- to C-terminus: Chromosomal replication initiator protein DnaA (454 aa).

The segment at 1–74 is domain I, interacts with DnaA modulators; it reads MFDLEKFWDS…IQSAYAYAGI (74 aa). Residues 74–116 are domain II; the sequence is IDIYPVFVVKNGPTPSSERMLEPQPQAKPEKARPQGREFTKDL. The interval 88–112 is disordered; that stretch reads PSSERMLEPQPQAKPEKARPQGREF. Basic and acidic residues predominate over residues 101-112; it reads KPEKARPQGREF. A domain III, AAA+ region region spans residues 117–333; that stretch reads RLNEKYTFEN…GALVKVQAQA (217 aa). Residues Gly-161, Gly-163, Lys-164, and Thr-165 each contribute to the ATP site. Residues 334–454 are domain IV, binds dsDNA; the sequence is TIQKQDINIG…VSDLRQMLER (121 aa).

The protein belongs to the DnaA family. As to quaternary structure, oligomerizes as a right-handed, spiral filament on DNA at oriC.

The protein resides in the cytoplasm. Functionally, plays an essential role in the initiation and regulation of chromosomal replication. ATP-DnaA binds to the origin of replication (oriC) to initiate formation of the DNA replication initiation complex once per cell cycle. Binds the DnaA box (a 9 base pair repeat at the origin) and separates the double-stranded (ds)DNA. Forms a right-handed helical filament on oriC DNA; dsDNA binds to the exterior of the filament while single-stranded (ss)DNA is stabiized in the filament's interior. The ATP-DnaA-oriC complex binds and stabilizes one strand of the AT-rich DNA unwinding element (DUE), permitting loading of DNA polymerase. After initiation quickly degrades to an ADP-DnaA complex that is not apt for DNA replication. Binds acidic phospholipids. The sequence is that of Chromosomal replication initiator protein DnaA from Lactobacillus delbrueckii subsp. bulgaricus (strain ATCC 11842 / DSM 20081 / BCRC 10696 / JCM 1002 / NBRC 13953 / NCIMB 11778 / NCTC 12712 / WDCM 00102 / Lb 14).